Consider the following 129-residue polypeptide: Small ribosomal subunit protein uS11 (129 aa).

The protein belongs to the universal ribosomal protein uS11 family. As to quaternary structure, part of the 30S ribosomal subunit. Interacts with proteins S7 and S18. Binds to IF-3.

Its function is as follows. Located on the platform of the 30S subunit, it bridges several disparate RNA helices of the 16S rRNA. Forms part of the Shine-Dalgarno cleft in the 70S ribosome. This is Small ribosomal subunit protein uS11 from Geobacillus stearothermophilus (Bacillus stearothermophilus).